Here is a 161-residue protein sequence, read N- to C-terminus: 6,7-dimethyl-8-ribityllumazine synthase (161 aa).

5-amino-6-(D-ribitylamino)uracil-binding positions include Trp-26, 58–60 (SFE), and 81–83 (VVI). Position 86–87 (86–87 (GT)) interacts with (2S)-2-hydroxy-3-oxobutyl phosphate. Residue His-89 is the Proton donor of the active site. Position 114 (Phe-114) interacts with 5-amino-6-(D-ribitylamino)uracil. Arg-128 provides a ligand contact to (2S)-2-hydroxy-3-oxobutyl phosphate.

It belongs to the DMRL synthase family.

It carries out the reaction (2S)-2-hydroxy-3-oxobutyl phosphate + 5-amino-6-(D-ribitylamino)uracil = 6,7-dimethyl-8-(1-D-ribityl)lumazine + phosphate + 2 H2O + H(+). The protein operates within cofactor biosynthesis; riboflavin biosynthesis; riboflavin from 2-hydroxy-3-oxobutyl phosphate and 5-amino-6-(D-ribitylamino)uracil: step 1/2. Catalyzes the formation of 6,7-dimethyl-8-ribityllumazine by condensation of 5-amino-6-(D-ribitylamino)uracil with 3,4-dihydroxy-2-butanone 4-phosphate. This is the penultimate step in the biosynthesis of riboflavin. The polypeptide is 6,7-dimethyl-8-ribityllumazine synthase (Streptomyces coelicolor (strain ATCC BAA-471 / A3(2) / M145)).